Here is a 270-residue protein sequence, read N- to C-terminus: tRNA pseudouridine synthase A (270 aa).

Asp-60 serves as the catalytic Nucleophile. Tyr-118 serves as a coordination point for substrate.

Belongs to the tRNA pseudouridine synthase TruA family. In terms of assembly, homodimer.

The catalysed reaction is uridine(38/39/40) in tRNA = pseudouridine(38/39/40) in tRNA. In terms of biological role, formation of pseudouridine at positions 38, 39 and 40 in the anticodon stem and loop of transfer RNAs. The chain is tRNA pseudouridine synthase A from Cronobacter sakazakii (strain ATCC BAA-894) (Enterobacter sakazakii).